Consider the following 384-residue polypeptide: Probable endopolygalacturonase C (384 aa).

The first 19 residues, 1-19 (MVRQLILISSLLAAVAVRA), serve as a signal peptide directing secretion. The propeptide occupies 20 to 40 (APADPAHPMVTEAPDVNLVEK). A disulfide bridge links Cys-45 with Cys-63. PbH1 repeat units lie at residues 176-207 (STDL…DIGE) and 208-229 (STYI…AINS). Asp-222 functions as the Proton donor in the catalytic mechanism. Residues Cys-224 and Cys-240 are joined by a disulfide bond. Residue His-244 is part of the active site. PbH1 repeat units lie at residues 254–280 (RDDN…RIKT) and 288–310 (VSEV…VIEQ). N-linked (GlcNAc...) asparagine glycosylation occurs at Asn-261. Intrachain disulfides connect Cys-349/Cys-354 and Cys-373/Cys-382.

It belongs to the glycosyl hydrolase 28 family.

Its subcellular location is the secreted. It carries out the reaction (1,4-alpha-D-galacturonosyl)n+m + H2O = (1,4-alpha-D-galacturonosyl)n + (1,4-alpha-D-galacturonosyl)m.. Its function is as follows. Involved in maceration and soft-rotting of plant tissue. Hydrolyzes the 1,4-alpha glycosidic bonds of de-esterified pectate in the smooth region of the plant cell wall. This is Probable endopolygalacturonase C (pgaC) from Aspergillus niger (strain ATCC MYA-4892 / CBS 513.88 / FGSC A1513).